We begin with the raw amino-acid sequence, 356 residues long: Hyaluronan and proteoglycan link protein 1 (356 aa).

Positions Met1–Leu9 are excised as a propeptide. An Ig-like V-type domain is found at Pro40–Val154. Asn58 carries an N-linked (GlcNAc...) asparagine glycan. 5 cysteine pairs are disulfide-bonded: Cys63/Cys141, Cys183/Cys254, Cys207/Cys228, Cys281/Cys351, and Cys306/Cys327. Link domains follow at residues Val161–Thr256 and Gly261–Arg353.

This sequence belongs to the HAPLN family. In terms of tissue distribution, ubiquitously expressed.

The protein resides in the secreted. It is found in the extracellular space. Its subcellular location is the extracellular matrix. In terms of biological role, stabilizes the aggregates of proteoglycan monomers with hyaluronic acid in the extracellular cartilage matrix. This is Hyaluronan and proteoglycan link protein 1 (Hapln1) from Mus musculus (Mouse).